We begin with the raw amino-acid sequence, 245 residues long: Inner membrane protein YgaZ (245 aa).

Topologically, residues 1-24 (MESPTPQPAPGSATFMEGCKDSLP) are cytoplasmic. The helical transmembrane segment at 25–45 (IVISYIPVAFAFGLNATRLGF) threads the bilayer. Over 46-63 (SPLESVFFSCIIYAGASQ) the chain is Periplasmic. The helical transmembrane segment at 64–84 (FVITAMLAAGSSLWIAALTVM) threads the bilayer. Residues 85 to 109 (AMDVRHVLYGPSLRSRIIQRLQKSK) lie on the Cytoplasmic side of the membrane. The helical transmembrane segment at 110 to 130 (TALWAFGLTDEVFAAATAKLV) threads the bilayer. The Periplasmic portion of the chain corresponds to 131–140 (RNNRRWSENW). A helical transmembrane segment spans residues 141 to 161 (MIGIAFSSWSSWVFGTVIGAF). Residues 162–172 (SGSGLLQGYPA) lie on the Cytoplasmic side of the membrane. A helical transmembrane segment spans residues 173–193 (VEAALGFMLPALFMSFLLASF). Residues 194–205 (QRKQSLCVTAAL) are Periplasmic-facing. The chain crosses the membrane as a helical span at residues 206–226 (VGALAGVTLFSIPVAILAGIV). Residues 227–245 (CGCLTALIQAFWQGAPDEL) are Cytoplasmic-facing.

Belongs to the AzlC family.

The protein resides in the cell inner membrane. The protein is Inner membrane protein YgaZ (ygaZ) of Escherichia coli (strain K12).